A 472-amino-acid polypeptide reads, in one-letter code: Arabinose-proton symporter (472 aa).

At 1 to 29 (MVTINTESALTPRSLRDTRRMNMFVSVAA) the chain is on the cytoplasmic side. The helical transmembrane segment at 30–50 (AVAGLLFGLDIGVIAGALPFI) threads the bilayer. The Periplasmic portion of the chain corresponds to 51–63 (TDHFVLTSRLQEW). Residues 64-84 (VVSSMMLGAAIGALFNGWLSF) traverse the membrane as a helical segment. Residues 85 to 91 (RLGRKYS) are Cytoplasmic-facing. Residues 92–112 (LMAGAILFVLGSIGSAFATSV) form a helical membrane-spanning segment. The Periplasmic segment spans residues 113–114 (EM). A helical membrane pass occupies residues 115–135 (LIAARVVLGIAVGIASYTAPL). Over 136-154 (YLSEMASENVRGKMISMYQ) the chain is Cytoplasmic. A helical membrane pass occupies residues 155–175 (LMVTLGIVLAFLSDTAFSYSG). Topologically, residues 176-178 (NWR) are periplasmic. A helical transmembrane segment spans residues 179–199 (AMLGVLALPAVLLIILVVFLP). Residues 200 to 257 (NSPRWLAEKGRHIEAEEVLRMLRDTSEKAREELNEIRESLKLKQGGWALFKINRNVRR) lie on the Cytoplasmic side of the membrane. A helical transmembrane segment spans residues 258–278 (AVFLGMLLQAMQQFTGMNIIM). Residues 279–297 (YYAPRIFKMAGFTTTEQQM) lie on the Periplasmic side of the membrane. The chain crosses the membrane as a helical span at residues 298–318 (IATLVVGLTFMFATFIAVFTV). The Cytoplasmic portion of the chain corresponds to 319–325 (DKAGRKP). The helical transmembrane segment at 326-346 (ALKIGFSVMALGTLVLGYCLM) threads the bilayer. At 347–361 (QFDNGTASSGLSWLS) the chain is on the periplasmic side. A helical membrane pass occupies residues 362–382 (VGMTMMCIAGYAMSAAPVVWI). Over 383–404 (LCSEIQPLKCRDFGITCSTTTN) the chain is Cytoplasmic. Transmembrane regions (helical) follow at residues 405–425 (WVSN…IGAA) and 426–446 (GTFW…FWLI). Residues 447-472 (PETKNVTLEHIERKLMAGEKLRNIGV) lie on the Cytoplasmic side of the membrane.

This sequence belongs to the major facilitator superfamily. Sugar transporter (TC 2.A.1.1) family.

Its subcellular location is the cell inner membrane. It carries out the reaction L-arabinose(in) + H(+)(in) = L-arabinose(out) + H(+)(out). Uptake of L-arabinose across the cytoplasmic membrane with the concomitant transport of protons into the cell (symport system). The protein is Arabinose-proton symporter (araE) of Escherichia coli O157:H7.